The primary structure comprises 369 residues: Glutamate 5-kinase (369 aa).

Residue Lys-14 participates in ATP binding. Residues Ser-54, Asp-141, and Asn-153 each coordinate substrate. ATP contacts are provided by residues 173–174 (SD) and 215–221 (TGGMVTK). Positions 277–355 (RGRLHLDPGA…SELATALGPA (79 aa)) constitute a PUA domain.

This sequence belongs to the glutamate 5-kinase family.

Its subcellular location is the cytoplasm. The catalysed reaction is L-glutamate + ATP = L-glutamyl 5-phosphate + ADP. It participates in amino-acid biosynthesis; L-proline biosynthesis; L-glutamate 5-semialdehyde from L-glutamate: step 1/2. Catalyzes the transfer of a phosphate group to glutamate to form L-glutamate 5-phosphate. This chain is Glutamate 5-kinase, found in Salinispora arenicola (strain CNS-205).